A 149-amino-acid polypeptide reads, in one-letter code: MRVWIDADACPRAARDQVVKFALKRGFEVVLVAGQAVARPNFACVKLIVVPSGPDAADDHLVEHAVPGELVICSDVPLADRLVKKGVAALDPRGREFDERNMGERLAVRNLFTDLREQGQVGGGQAPYSEKDRQAFANALDRILTRLSR.

It belongs to the UPF0178 family.

This is UPF0178 protein Pmen_0294 from Ectopseudomonas mendocina (strain ymp) (Pseudomonas mendocina).